Reading from the N-terminus, the 274-residue chain is Cytochrome b-c1 complex subunit Rieske, mitochondrial (274 aa).

Over 79–103 the chain is Mitochondrial matrix; sequence SHTDIKVPDFSEYRRLEVLDSTKSS. The helical transmembrane segment at 104–140 threads the bilayer; it reads RESSEARKGFSYLVTGVTTVGVAYAAKNAVTQFVSSM. Topologically, residues 141–274 are mitochondrial intermembrane; that stretch reads SASADVLALA…FTSDDMVIVG (134 aa). Residues 187–272 form the Rieske domain; the sequence is EAAVELSQLR…YEFTSDDMVI (86 aa). Residues C217, H219, C236, H239, and S241 each coordinate [2Fe-2S] cluster. C222 and C238 are oxidised to a cystine.

It belongs to the Rieske iron-sulfur protein family. In terms of assembly, component of the ubiquinol-cytochrome c oxidoreductase (cytochrome b-c1 complex, complex III, CIII), a multisubunit enzyme composed of 11 subunits. The complex is composed of 3 respiratory subunits cytochrome b, cytochrome c1 and Rieske protein UQCRFS1, 2 core protein subunits UQCRC1/QCR1 and UQCRC2/QCR2, and 6 low-molecular weight protein subunits UQCRH/QCR6, UQCRB/QCR7, UQCRQ/QCR8, UQCR10/QCR9, UQCR11/QCR10 and subunit 9, the cleavage product of Rieske protein UQCRFS1. The complex exists as an obligatory dimer and forms supercomplexes (SCs) in the inner mitochondrial membrane with NADH-ubiquinone oxidoreductase (complex I, CI) and cytochrome c oxidase (complex IV, CIV), resulting in different assemblies (supercomplex SCI(1)III(2)IV(1) and megacomplex MCI(2)III(2)IV(2)). Incorporation of the Rieske protein UQCRFS1 is the penultimate step in complex III assembly. Interacts with TTC19, which is involved in the clearance of UQCRFS1 fragments. As to quaternary structure, component of the ubiquinol-cytochrome c oxidoreductase (cytochrome b-c1 complex, complex III, CIII). Subunit 9 corresponds to the mitochondrial targeting sequence (MTS) of Rieske protein UQCRFS1. It is retained after processing and incorporated inside complex III, where it remains bound to the complex and localizes between the 2 core subunits UQCRC1/QCR1 and UQCRC2/QCR2. Requires [2Fe-2S] cluster as cofactor. In terms of processing, proteolytic processing is necessary for the correct insertion of UQCRFS1 in the complex III dimer. Several fragments are generated during UQCRFS1 insertion, most probably due to the endogenous matrix-processing peptidase (MPP) activity of the 2 core protein subunits UQCRC1/QCR1 and UQCRC2/QCR2, which are homologous to the 2 mitochondrial-processing peptidase (MPP) subunits beta-MPP and alpha-MPP respectively. The action of the protease is also necessary for the clearance of the UQCRFS1 fragments.

Its subcellular location is the mitochondrion inner membrane. It carries out the reaction a quinol + 2 Fe(III)-[cytochrome c](out) = a quinone + 2 Fe(II)-[cytochrome c](out) + 2 H(+)(out). Functionally, component of the ubiquinol-cytochrome c oxidoreductase, a multisubunit transmembrane complex that is part of the mitochondrial electron transport chain which drives oxidative phosphorylation. The respiratory chain contains 3 multisubunit complexes succinate dehydrogenase (complex II, CII), ubiquinol-cytochrome c oxidoreductase (cytochrome b-c1 complex, complex III, CIII) and cytochrome c oxidase (complex IV, CIV), that cooperate to transfer electrons derived from NADH and succinate to molecular oxygen, creating an electrochemical gradient over the inner membrane that drives transmembrane transport and the ATP synthase. The cytochrome b-c1 complex catalyzes electron transfer from ubiquinol to cytochrome c, linking this redox reaction to translocation of protons across the mitochondrial inner membrane, with protons being carried across the membrane as hydrogens on the quinol. In the process called Q cycle, 2 protons are consumed from the matrix, 4 protons are released into the intermembrane space and 2 electrons are passed to cytochrome c. The Rieske protein is a catalytic core subunit containing a [2Fe-2S] iron-sulfur cluster. It cycles between 2 conformational states during catalysis to transfer electrons from the quinol bound in the Q(0) site in cytochrome b to cytochrome c1. Incorporation of UQCRFS1 is the penultimate step in complex III assembly. Its function is as follows. Component of the ubiquinol-cytochrome c oxidoreductase (cytochrome b-c1 complex, complex III, CIII). UQCRFS1 undergoes proteolytic processing once it is incorporated in the complex III dimer. One of the fragments, called subunit 9, corresponds to its mitochondrial targeting sequence (MTS). The proteolytic processing is necessary for the correct insertion of UQCRFS1 in the complex III dimer, but the persistence of UQCRFS1-derived fragments may prevent newly imported UQCRFS1 to be processed and assembled into complex III and is detrimental for the complex III structure and function. This chain is Cytochrome b-c1 complex subunit Rieske, mitochondrial (UQCRFS1), found in Gorilla gorilla gorilla (Western lowland gorilla).